Here is a 186-residue protein sequence, read N- to C-terminus: Glycerol-3-phosphate acyltransferase 1 (186 aa).

A run of 5 helical transmembrane segments spans residues 9–29, 58–78, 85–105, 121–141, and 161–181; these read MQFL…AYIV, GYFV…VSIA, STFV…PVLF, IAFD…FYLI, and ILYS…VLIL.

This sequence belongs to the PlsY family. In terms of assembly, probably interacts with PlsX.

It is found in the cell membrane. The enzyme catalyses an acyl phosphate + sn-glycerol 3-phosphate = a 1-acyl-sn-glycero-3-phosphate + phosphate. It participates in lipid metabolism; phospholipid metabolism. In terms of biological role, catalyzes the transfer of an acyl group from acyl-phosphate (acyl-PO(4)) to glycerol-3-phosphate (G3P) to form lysophosphatidic acid (LPA). This enzyme utilizes acyl-phosphate as fatty acyl donor, but not acyl-CoA or acyl-ACP. The chain is Glycerol-3-phosphate acyltransferase 1 from Bacillus cereus (strain ZK / E33L).